Consider the following 361-residue polypeptide: tRNA-specific 2-thiouridylase MnmA (361 aa).

ATP-binding positions include 11–18 (GMSGGVDS) and Met-37. Residues 97–99 (NPD) are interaction with target base in tRNA. Cys-102 acts as the Nucleophile in catalysis. Cys-102 and Cys-199 form a disulfide bridge. Gly-126 is a binding site for ATP. The segment at 149–151 (KDQ) is interaction with tRNA. The Cysteine persulfide intermediate role is filled by Cys-199. An interaction with tRNA region spans residues 311-312 (RY).

It belongs to the MnmA/TRMU family.

Its subcellular location is the cytoplasm. The enzyme catalyses S-sulfanyl-L-cysteinyl-[protein] + uridine(34) in tRNA + AH2 + ATP = 2-thiouridine(34) in tRNA + L-cysteinyl-[protein] + A + AMP + diphosphate + H(+). In terms of biological role, catalyzes the 2-thiolation of uridine at the wobble position (U34) of tRNA, leading to the formation of s(2)U34. The chain is tRNA-specific 2-thiouridylase MnmA from Cupriavidus taiwanensis (strain DSM 17343 / BCRC 17206 / CCUG 44338 / CIP 107171 / LMG 19424 / R1) (Ralstonia taiwanensis (strain LMG 19424)).